A 331-amino-acid polypeptide reads, in one-letter code: Malate dehydrogenase (331 aa).

14–20 (GAAGSIG) lines the NAD(+) pocket. Residues Arg-95 and Arg-101 each contribute to the substrate site. Residues Asn-108, Gln-115, and 132–134 (VGN) contribute to the NAD(+) site. Residues Asn-134 and Arg-165 each coordinate substrate. The active-site Proton acceptor is His-190.

Belongs to the LDH/MDH superfamily. MDH type 2 family.

It catalyses the reaction (S)-malate + NAD(+) = oxaloacetate + NADH + H(+). Functionally, catalyzes the reversible oxidation of malate to oxaloacetate. This chain is Malate dehydrogenase, found in Rhodococcus jostii (strain RHA1).